We begin with the raw amino-acid sequence, 455 residues long: Histone chaperone RTT106 (455 aa).

The residue at position 2 (Ser-2) is an N-acetylserine. The dimeric region stretch occupies residues 2–67; it reads SKLFLDELPE…SSDLLKTDEI (66 aa). 2 consecutive PH domains span residues 68 to 200 and 217 to 301; these read SETN…GFKI and INSF…VKRK. Positions 68 to 301 are double PH domain; the sequence is SETNTIFKLE…AKIDDYVKRK (234 aa). The segment covering 305–314 has biased composition (basic and acidic residues); sequence DKSMSEELKA. The segment at 305 to 455 is disordered; that stretch reads DKSMSEELKA…DEDGSGVEYD (151 aa). Residues 319–339 show a composition bias toward polar residues; sequence KGQATDGTADQPSILQEATRQ. 2 stretches are compositionally biased toward acidic residues: residues 350–366 and 376–395; these read SDDD…ESDL and DGAE…DEEE. Polar residues predominate over residues 402–418; sequence ALNRDNSFASINGQPEQ. Phosphoserine is present on residues Ser-408 and Ser-411. Over residues 420 to 429 the composition is skewed to basic and acidic residues; that stretch reads LQYKEFKEPL. Residues 430–455 show a composition bias toward acidic residues; sequence ELEDIPIEIDNDDDEDDEDGSGVEYD. The residue at position 450 (Ser-450) is a Phosphoserine.

It belongs to the RTT106 family. As to quaternary structure, homodimers (via the N-terminal domain). Interacts with the SWI/SNF complex. Interacts with the RSC complex. Interacts with the HIR complex. Interacts with the CAF-1 complex. Interacts with RLF2. Interacts with SIR4. Interacts with YTA7. Interacts with CAC2. Interacts with HPC2. Interacts with HIR2. Interacts with MSI1. Interacts with HIR1. Interacts with histone H3. Interacts with histone H4.

It is found in the nucleus. The protein resides in the chromosome. In terms of biological role, histones H3 and H4 chaperone involved in the nucleosome formation and heterochromatin silencing. Required for the deposition of H3K56ac-carrying H3-H4 complex onto newly-replicated DNA. Plays a role in the transcriptional regulation of the cell-cycle dependent histone genes by directly recruiting the SWI/SNF and RSC chromatin remodeling complexes to the histone genes in a cell cycle dependent manner. In cooperation with HIR and ASF1, creates a repressive structure at the core histone gene promoter and contributes to their repression outside of S phase. Involved in regulation of Ty1 transposition. The protein is Histone chaperone RTT106 of Saccharomyces cerevisiae (strain ATCC 204508 / S288c) (Baker's yeast).